Consider the following 743-residue polypeptide: Catalase-peroxidase (743 aa).

Residues 1 to 15 (MSSDSRPPQPDTSTQ) show a composition bias toward polar residues. The segment at 1–40 (MSSDSRPPQPDTSTQSNSESESPAISSPTPQDHAPMTNRD) is disordered. The span at 16-28 (SNSESESPAISSP) shows a compositional bias: low complexity. A cross-link (tryptophyl-tyrosyl-methioninium (Trp-Tyr) (with M-259)) is located at residues 110–233 (WHAAGTYRIQ…YGATTMGLIY (124 aa)). The Proton acceptor role is filled by histidine 111. Positions 233 to 259 (YVNPEGPEGKPDPVAAAHDIRETFARM) form a cross-link, tryptophyl-tyrosyl-methioninium (Tyr-Met) (with W-110). Residue histidine 274 coordinates heme b. Positions 490–511 (DKRGGANGGRLRLEPQKSWESN) are disordered.

It belongs to the peroxidase family. Peroxidase/catalase subfamily. In terms of assembly, homodimer or homotetramer. Heme b is required as a cofactor. Post-translationally, formation of the three residue Trp-Tyr-Met cross-link is important for the catalase, but not the peroxidase activity of the enzyme.

It catalyses the reaction H2O2 + AH2 = A + 2 H2O. It carries out the reaction 2 H2O2 = O2 + 2 H2O. In terms of biological role, bifunctional enzyme with both catalase and broad-spectrum peroxidase activity. In Mycobacterium ulcerans (strain Agy99), this protein is Catalase-peroxidase.